The primary structure comprises 406 residues: Odorant receptor 42a (406 aa).

Residues 1-44 (MDLRRWFPTLYTQSKDSPVRSRDATLYLLRCVFLMGVRKPPAKF) lie on the Cytoplasmic side of the membrane. Residues 45–65 (FVAYVLWSFALNFCSTFYQPI) traverse the membrane as a helical segment. Residues 66–86 (GFLTGYISHLSEFSPGEFLTS) lie on the Extracellular side of the membrane. Residues 87-107 (LQVAFNAWSCSTKVLIVWALV) form a helical membrane-spanning segment. Topologically, residues 108–142 (KRFDEANNLLDEMDRRITDPGERLQIHRAVSLSNR) are cytoplasmic. The chain crosses the membrane as a helical span at residues 143–163 (IFFFFMAVYMVYATNTFLSAI). Topologically, residues 164–181 (FIGRPPYQNYYPFLDWRS) are extracellular. Residues 182-202 (STLHLALQAGLEYFAMAGACF) traverse the membrane as a helical segment. The Cytoplasmic portion of the chain corresponds to 203–271 (QDVCVDCYPV…DCLRPVISGT (69 aa)). The chain crosses the membrane as a helical span at residues 272 to 292 (IFVQFLVVGLVLGFTLINIVL). Residues 293 to 298 (FANLGS) lie on the Extracellular side of the membrane. The chain crosses the membrane as a helical span at residues 299-319 (AIAALSFMAAVLLETTPFCIL). Residues 320–359 (CNYLTEDCYKLADALFQSNWIDEEKRYQKTLMYFLQKLQQ) lie on the Cytoplasmic side of the membrane. The chain crosses the membrane as a helical span at residues 360-380 (PITFMAMNVFPISVGTNISVT). The Extracellular segment spans residues 381–406 (KFSFSVFTLVKQMNISEKLAKSEMEE). N-linked (GlcNAc...) asparagine glycosylation occurs at Asn394.

Belongs to the insect chemoreceptor superfamily. Heteromeric odorant receptor channel (TC 1.A.69) family. Or2a subfamily. Interacts with Orco. Complexes exist early in the endomembrane system in olfactory sensory neurons (OSNs), coupling these complexes to the conserved ciliary trafficking pathway.

It localises to the cell membrane. Functionally, odorant receptor which mediates acceptance or avoidance behavior, depending on its substrates. The odorant receptor repertoire encodes a large collection of odor stimuli that vary widely in identity, intensity, and duration. May form a complex with Orco to form odorant-sensing units, providing sensitive and prolonged odorant signaling and calcium permeability. Involved in the behavioral responses to butanol, ethyl acetate, propyl acetate, and pentyl acetate. Also responds to pyrazines. This chain is Odorant receptor 42a (Or42a), found in Drosophila melanogaster (Fruit fly).